Reading from the N-terminus, the 239-residue chain is Transcriptional regulatory protein DcuR (239 aa).

The Response regulatory domain occupies 3-121; sequence NVLIIDDDAM…RFEEALTGWR (119 aa). Asp56 bears the 4-aspartylphosphate mark. The segment at residues 181–200 is a DNA-binding region (H-T-H motif); it reads TDELANEVNISRVSCRKYLI.

Phosphorylated and activated by DcuS.

Its subcellular location is the cytoplasm. Functionally, member of the two-component regulatory system DcuR/DcuS. Involved in the C4-dicarboxylate-stimulated regulation of the genes encoding the anaerobic fumarate respiratory system (frdABCD; nuoAN; dcuB; dcuC; sdhCDAB; etc.). Weakly regulates the aerobic C4-dicarboxylate transporter dctA. This is Transcriptional regulatory protein DcuR (dcuR) from Escherichia coli O6:H1 (strain CFT073 / ATCC 700928 / UPEC).